Reading from the N-terminus, the 536-residue chain is Phosphoenolpyruvate carboxykinase (ATP) (536 aa).

Arg-61, Tyr-195, and Lys-201 together coordinate substrate. ATP contacts are provided by residues Lys-201, His-220, and 236–244 (GLSGTGKTT). Positions 201 and 220 each coordinate Mn(2+). Asp-257 lines the Mn(2+) pocket. ATP contacts are provided by Glu-285, Arg-323, and Thr-448. A substrate-binding site is contributed by Arg-323.

This sequence belongs to the phosphoenolpyruvate carboxykinase (ATP) family. Mn(2+) serves as cofactor.

Its subcellular location is the cytoplasm. It carries out the reaction oxaloacetate + ATP = phosphoenolpyruvate + ADP + CO2. It functions in the pathway carbohydrate biosynthesis; gluconeogenesis. In terms of biological role, involved in the gluconeogenesis. Catalyzes the conversion of oxaloacetate (OAA) to phosphoenolpyruvate (PEP) through direct phosphoryl transfer between the nucleoside triphosphate and OAA. This Methylobacterium sp. (strain 4-46) protein is Phosphoenolpyruvate carboxykinase (ATP).